Here is a 194-residue protein sequence, read N- to C-terminus: Imidazoleglycerol-phosphate dehydratase (194 aa).

This sequence belongs to the imidazoleglycerol-phosphate dehydratase family.

The protein localises to the cytoplasm. It carries out the reaction D-erythro-1-(imidazol-4-yl)glycerol 3-phosphate = 3-(imidazol-4-yl)-2-oxopropyl phosphate + H2O. Its pathway is amino-acid biosynthesis; L-histidine biosynthesis; L-histidine from 5-phospho-alpha-D-ribose 1-diphosphate: step 6/9. The polypeptide is Imidazoleglycerol-phosphate dehydratase (Limosilactobacillus fermentum (strain NBRC 3956 / LMG 18251) (Lactobacillus fermentum)).